A 412-amino-acid polypeptide reads, in one-letter code: Multifunctional CCA protein (412 aa).

Residues glycine 8 and arginine 11 each contribute to the ATP site. Residues glycine 8 and arginine 11 each contribute to the CTP site. The Mg(2+) site is built by aspartate 21 and aspartate 23. Residues arginine 91, arginine 137, and arginine 140 each coordinate ATP. CTP contacts are provided by arginine 91, arginine 137, and arginine 140. The 102-residue stretch at 226–327 (TGIHTMMVID…VTLFEKTDAL (102 aa)) folds into the HD domain.

This sequence belongs to the tRNA nucleotidyltransferase/poly(A) polymerase family. Bacterial CCA-adding enzyme type 1 subfamily. In terms of assembly, monomer. Can also form homodimers and oligomers. The cofactor is Mg(2+). Ni(2+) serves as cofactor.

The catalysed reaction is a tRNA precursor + 2 CTP + ATP = a tRNA with a 3' CCA end + 3 diphosphate. It carries out the reaction a tRNA with a 3' CCA end + 2 CTP + ATP = a tRNA with a 3' CCACCA end + 3 diphosphate. Functionally, catalyzes the addition and repair of the essential 3'-terminal CCA sequence in tRNAs without using a nucleic acid template. Adds these three nucleotides in the order of C, C, and A to the tRNA nucleotide-73, using CTP and ATP as substrates and producing inorganic pyrophosphate. tRNA 3'-terminal CCA addition is required both for tRNA processing and repair. Also involved in tRNA surveillance by mediating tandem CCA addition to generate a CCACCA at the 3' terminus of unstable tRNAs. While stable tRNAs receive only 3'-terminal CCA, unstable tRNAs are marked with CCACCA and rapidly degraded. In Dechloromonas aromatica (strain RCB), this protein is Multifunctional CCA protein.